We begin with the raw amino-acid sequence, 1222 residues long: Kinesin-related protein 9 (1222 aa).

Over residues 1–25 (MDNNNNNFSTPKQPTINSTTGGQLR) the composition is skewed to polar residues. Disordered regions lie at residues 1–55 (MDNN…ITNS), 75–165 (MDSL…STNI), and 188–343 (SSNT…TQPL). Residues 26–55 (SRSNSSPSTSSISTPRNGSTTATTSSITNS) are compositionally biased toward low complexity. Residues 75–85 (MDSLSTPMSQS) are compositionally biased toward polar residues. Composition is skewed to low complexity over residues 122–165 (SFIS…STNI), 194–209 (SSLP…PLSN), 216–238 (NHHL…ISTT), and 254–325 (NLTT…RTPI). Over residues 326–343 (QNFNSVGGVNITSKTQPL) the composition is skewed to polar residues. The region spanning 350–719 (SIQAVCRFRP…LNFGQRAQSV (370 aa)) is the Kinesin motor domain. 438 to 445 (GQTGAGKT) lines the ATP pocket. The stretch at 724-1026 (LQNVEESHSE…DTLTNKLEIQ (303 aa)) forms a coiled coil. Residues 1144 to 1174 (NINNNNNIKNNNNNNKLKSKKVGSSSSSSSN) are disordered. A helical transmembrane segment spans residues 1183-1203 (ILFFLIILVILFFLMVAVGLT).

It belongs to the TRAFAC class myosin-kinesin ATPase superfamily. Kinesin family.

The protein localises to the membrane. Its subcellular location is the cytoplasm. It localises to the cytoskeleton. Functionally, microtubule-associated force-producing protein that plays a role in organelle transport. Its motor activity is directed toward the microtubule's plus end. The sequence is that of Kinesin-related protein 9 (kif9) from Dictyostelium discoideum (Social amoeba).